Reading from the N-terminus, the 323-residue chain is G patch domain-containing protein 4 (323 aa).

4 disordered regions span residues 1–32 (MSAS…GLGR), 84–110 (GVKV…SNRN), 124–185 (PGGE…SAKL), and 197–323 (AKYG…NKSE). Composition is skewed to basic and acidic residues over residues 9–32 (SQGR…GLGR) and 84–94 (GVKVNRTKDDD). A G-patch domain is found at 11 to 57 (GRRFAEQQMHKHGWTEGKGLGRRENGISEAIKVKVKCDHAGVGHNSA). The span at 131-141 (KEPSSSESSDS) shows a compositional bias: low complexity. Residues 252–261 (EREEEEEEES) are compositionally biased toward acidic residues. Positions 281–291 (SKKKKSKKKHR) are enriched in basic residues. Residues 294 to 306 (SASPQEEQVTEST) are compositionally biased toward polar residues. Over residues 311–323 (KPKKKKKKKNKSE) the composition is skewed to basic residues.

The chain is G patch domain-containing protein 4 (gpatch4) from Xenopus tropicalis (Western clawed frog).